A 142-amino-acid chain; its full sequence is Large ribosomal subunit protein bL17 (142 aa).

This sequence belongs to the bacterial ribosomal protein bL17 family. In terms of assembly, part of the 50S ribosomal subunit. Contacts protein L32.

The sequence is that of Large ribosomal subunit protein bL17 from Wolbachia pipientis subsp. Culex pipiens (strain wPip).